The following is a 132-amino-acid chain: Small ribosomal subunit protein uS8 (132 aa).

The protein belongs to the universal ribosomal protein uS8 family. In terms of assembly, part of the 30S ribosomal subunit. Contacts proteins S5 and S12.

One of the primary rRNA binding proteins, it binds directly to 16S rRNA central domain where it helps coordinate assembly of the platform of the 30S subunit. The protein is Small ribosomal subunit protein uS8 of Granulibacter bethesdensis (strain ATCC BAA-1260 / CGDNIH1).